Consider the following 104-residue polypeptide: Large ribosomal subunit protein uL24 (104 aa).

The protein belongs to the universal ribosomal protein uL24 family. In terms of assembly, part of the 50S ribosomal subunit.

Its function is as follows. One of two assembly initiator proteins, it binds directly to the 5'-end of the 23S rRNA, where it nucleates assembly of the 50S subunit. Functionally, one of the proteins that surrounds the polypeptide exit tunnel on the outside of the subunit. The polypeptide is Large ribosomal subunit protein uL24 (Treponema denticola (strain ATCC 35405 / DSM 14222 / CIP 103919 / JCM 8153 / KCTC 15104)).